Reading from the N-terminus, the 482-residue chain is C3a anaphylatoxin chemotactic receptor (482 aa).

Over 1–23 the chain is Extracellular; the sequence is MASFSAETNSTDLLSQPWNEPPV. Asn-9 is a glycosylation site (N-linked (GlcNAc...) asparagine). Residues 24 to 46 traverse the membrane as a helical segment; sequence ILSMVILSLTFLLGLPGNGLVLW. Residues 47–57 are Cytoplasmic-facing; the sequence is VAGLKMQRTVN. The chain crosses the membrane as a helical span at residues 58-80; the sequence is TVWFLHLTLADLLCCLSLPFSLA. Topologically, residues 81-96 are extracellular; that stretch reads HLALQGQWPYGRFLCE. Cys-95 and Cys-172 are disulfide-bonded. Residues 97-118 traverse the membrane as a helical segment; it reads LIPSIIVLNMFASVFLLTAISL. The Cytoplasmic portion of the chain corresponds to 119–139; sequence DRCLVVFKPIWCQNHRNVGTA. A helical transmembrane segment spans residues 140 to 160; the sequence is CSICGCIWVVAFVMCIPVFVY. At 161-340 the chain is on the extracellular side; that stretch reads REIFTADNHN…TPLVAITITR (180 aa). 2 positions are modified to sulfotyrosine: Tyr-174 and Tyr-184. The N-linked (GlcNAc...) asparagine glycan is linked to Asn-194. Sulfotyrosine is present on Tyr-318. Residues 341 to 360 traverse the membrane as a helical segment; sequence LVVGFLLPSVIMIACYSFIV. The Cytoplasmic portion of the chain corresponds to 361 to 377; the sequence is FRMQRGRFAKSQSKTFR. Residues 378 to 400 traverse the membrane as a helical segment; sequence VAVVVVAVFLVCWTPYHIFGVLS. The Extracellular segment spans residues 401–417; sequence LLIDPESPLGKTLMSWD. A helical transmembrane segment spans residues 418 to 438; sequence HVSIALASANSCFNPFLYALL. The Cytoplasmic segment spans residues 439-482; it reads GKDFRKKARQSIQGILEAAFSEELTRSTHCNSNNVFSERNSTTV. Position 459 is a phosphoserine (Ser-459). Residue Thr-463 is modified to Phosphothreonine.

Belongs to the G-protein coupled receptor 1 family. Interacts with VGF-derived peptide TLQP-21. Among the sulfation sites Tyr-174 is essential for binding of C3a anaphylatoxin.

The protein localises to the cell membrane. Its function is as follows. Receptor for the chemotactic and inflammatory peptide anaphylatoxin C3a. This receptor stimulates chemotaxis, granule enzyme release and superoxide anion production. In Pongo abelii (Sumatran orangutan), this protein is C3a anaphylatoxin chemotactic receptor (C3AR1).